Reading from the N-terminus, the 198-residue chain is Inositol diphosphatase DSP4 (198 aa).

Positions 1-23 (MTLESYAGDVHTVPQSENSMEER) are disordered. A Tyrosine-protein phosphatase domain is found at 34-188 (NFAMVDNGIF…LKHTPLSFSC (155 aa)). The segment at 90 to 102 (FGIERCKEPFVNI) is WPD loop important for active site topology. Asn101 and Ile102 together coordinate 1D-myo-inositol hexakisphosphate. The active-site Phosphocysteine intermediate is Cys126.

It belongs to the protein-tyrosine phosphatase family. Atypical dual-specificity phosphatase Siw14-like subfamily. As to expression, highly expressed in flowers and at lower levels in roots, leaves, stems and siliques.

The enzyme catalyses 5-diphospho-1D-myo-inositol 1,2,3,4,6-pentakisphosphate + H2O = 1D-myo-inositol hexakisphosphate + phosphate + H(+). The catalysed reaction is 1,5-bis(diphospho)-1D-myo-inositol 2,3,4,6-tetrakisphosphate + H2O = 1-diphospho-1D-myo-inositol 2,3,4,5,6-pentakisphosphate + phosphate + 2 H(+). It catalyses the reaction 3,5-bis(diphospho)-1D-myo-inositol 1,2,4,6-tetrakisphosphate + H2O = 3-diphospho-1D-myo-inositol 1,2,4,5,6-pentakisphosphate + phosphate + 2 H(+). It carries out the reaction 6-diphospho-1D-myo-inositol pentakisphosphate + H2O = 1D-myo-inositol hexakisphosphate + phosphate + H(+). In terms of biological role, cleaves the beta-phosphate at the 5-position of soluble inositol pyrophosphates. Has highest activity on 5-diphosphoinositol 1,2,3,4,6-pentakisphosphate (5-InsP(7)), 1,5-bis-diphosphoinositol 2,3,4,6-tetrakisphosphate (1,5-InsP(8)) and 3,5-InsP(8). Acts as a negative regulator of defense responses against the bacterial pathogen Pseudomonas syringae pv tomato strain DC3000. This is Inositol diphosphatase DSP4 from Arabidopsis thaliana (Mouse-ear cress).